Consider the following 167-residue polypeptide: Caltractin (167 aa).

The span at 1-18 (MSSARTVRKDKPRGRHHG) shows a compositional bias: basic residues. The tract at residues 1–23 (MSSARTVRKDKPRGRHHGLTQQK) is disordered. 4 EF-hand domains span residues 22–57 (QKRQ…LGFE), 58–93 (MTEE…KIGE), 95–130 (DTKE…LGEN), and 131–166 (FTVK…TSYA). Residues Asp-35, Asp-37, Ser-39, Thr-41, Glu-46, Asp-71, Asp-73, Ser-75, Glu-82, Asp-108, Asp-110, Asn-112, Lys-114, Asp-119, Asp-144, Asp-146, Asp-148, Glu-150, and Glu-155 each coordinate Ca(2+).

It belongs to the centrin family.

It localises to the cytoplasm. The protein resides in the cytoskeleton. The protein localises to the microtubule organizing center. Plays a fundamental role in microtubule-organizing center structure and function. The sequence is that of Caltractin from Atriplex nummularia (Old man saltbush).